The chain runs to 487 residues: Multiple inositol polyphosphate phosphatase 1 (487 aa).

A signal peptide spans 1 to 30 (MLRAPGCLLRTSVAPAAALAAALLSSLARC). His-89 is an active-site residue. N-linked (GlcNAc...) asparagine glycosylation is found at Asn-242 and Asn-481. The Prevents secretion from ER signature appears at 484–487 (SDEL).

It belongs to the histidine acid phosphatase family. MINPP1 subfamily. N-glycosylated. Widely expressed with highest levels in kidney, liver, cerebellum and placenta.

It is found in the endoplasmic reticulum lumen. The protein localises to the secreted. Its subcellular location is the cell membrane. It catalyses the reaction 1D-myo-inositol hexakisphosphate + H2O = 1D-myo-inositol 1,2,4,5,6-pentakisphosphate + phosphate. The enzyme catalyses 1D-myo-inositol 1,2,4,5,6-pentakisphosphate + H2O = 1D-myo-inositol 1,2,5,6-tetrakisphosphate + phosphate. It carries out the reaction 1D-myo-inositol 1,2,5,6-tetrakisphosphate + H2O = 1D-myo-inositol 1,2,6-trisphosphate + phosphate. The catalysed reaction is 1D-myo-inositol 1,2,6-trisphosphate + H2O = 1D-myo-inositol 1,2-bisphosphate + phosphate. It catalyses the reaction 1D-myo-inositol 1,2-bisphosphate + H2O = 1D-myo-inositol 2-phosphate + phosphate. The enzyme catalyses 1D-myo-inositol hexakisphosphate + H2O = 1D-myo-inositol 1,2,3,5,6-pentakisphosphate + phosphate. It carries out the reaction 1D-myo-inositol 1,2,3,5,6-pentakisphosphate + H2O = 1D-myo-inositol 1,2,3,6-tetrakisphosphate + phosphate. The catalysed reaction is 1D-myo-inositol 1,2,3,6-tetrakisphosphate + H2O = 1D-myo-inositol 1,2,3-trisphosphate + phosphate. It catalyses the reaction 1D-myo-inositol 1,2,3-trisphosphate + H2O = 1D-myo-inositol 2,3-bisphosphate + phosphate. The enzyme catalyses 1D-myo-inositol 2,3-bisphosphate + H2O = 1D-myo-inositol 2-phosphate + phosphate. It carries out the reaction 1D-myo-inositol 1,3,4,5,6-pentakisphosphate + H2O = 1D-myo-inositol 1,4,5,6-tetrakisphosphate + phosphate. The catalysed reaction is 1D-myo-inositol 1,4,5,6-tetrakisphosphate + H2O = 1D-myo-inositol 1,4,5-trisphosphate + phosphate. It catalyses the reaction (2R)-2,3-bisphosphoglycerate + H2O = (2R)-2-phosphoglycerate + phosphate. Its function is as follows. Multiple inositol polyphosphate phosphatase that hydrolyzes 1D-myo-inositol 1,3,4,5,6-pentakisphosphate (InsP5[2OH]) and 1D-myo-inositol hexakisphosphate (InsP6) to a range of less phosphorylated inositol phosphates. This regulates the availability of these various small molecule second messengers and metal chelators which control many aspects of cell physiology. Has a weak in vitro activity towards 1D-myo-inositol 1,4,5-trisphosphate which is unlikely to be physiologically relevant. By regulating intracellular inositol polyphosphates pools, which act as metal chelators, it may control the availability of intracellular calcium and iron, which are important for proper neuronal development and homeostasis. May have a dual substrate specificity, and function as a 2,3-bisphosphoglycerate 3-phosphatase hydrolyzing 2,3-bisphosphoglycerate to 2-phosphoglycerate. 2,3-bisphosphoglycerate (BPG) is formed as part of the Rapoport-Luebering glycolytic bypass and is a regulator of systemic oxygen homeostasis as the major allosteric effector of hemoglobin. The polypeptide is Multiple inositol polyphosphate phosphatase 1 (Homo sapiens (Human)).